A 440-amino-acid chain; its full sequence is Chorismate synthase 1, chloroplastic (440 aa).

A chloroplast-targeting transit peptide spans 1 to 54; the sequence is MASFVPTKQFVGASSSSDIGSSRLVSLQLPSKFSSSNFHLPSRPSQLKRLEIQA. The tract at residues 100–147 is disordered; the sequence is RRRPGQSRITTPRKETDTCKISSGTADGLTTGSPIKVEVPNTDQRGND. Residues 118–132 show a composition bias toward polar residues; sequence CKISSGTADGLTTGS.

The protein belongs to the chorismate synthase family. In terms of assembly, homotetramer. It depends on FMNH2 as a cofactor. In terms of tissue distribution, predominantly expressed in flowers and roots and, to a lesser extent, in stems, leaves, and cotyledons.

Its subcellular location is the plastid. The protein localises to the chloroplast. The enzyme catalyses 5-O-(1-carboxyvinyl)-3-phosphoshikimate = chorismate + phosphate. It functions in the pathway metabolic intermediate biosynthesis; chorismate biosynthesis; chorismate from D-erythrose 4-phosphate and phosphoenolpyruvate: step 7/7. In terms of biological role, catalyzes the last common step of the biosynthesis of aromatic amino acids, produced via the shikimic acid pathway. This Solanum lycopersicum (Tomato) protein is Chorismate synthase 1, chloroplastic (CS1).